The sequence spans 247 residues: Large ribosomal subunit protein uL30 (247 aa).

This sequence belongs to the universal ribosomal protein uL30 family.

This is Large ribosomal subunit protein uL30 (RPL7L1) from Sus scrofa (Pig).